A 510-amino-acid polypeptide reads, in one-letter code: Probable cytochrome P450 312a1 (510 aa).

Cys455 is a heme binding site.

It belongs to the cytochrome P450 family. Heme serves as cofactor.

It localises to the endoplasmic reticulum membrane. Its subcellular location is the microsome membrane. Functionally, may be involved in the metabolism of insect hormones and in the breakdown of synthetic insecticides. The polypeptide is Probable cytochrome P450 312a1 (Cyp312a1) (Drosophila melanogaster (Fruit fly)).